The chain runs to 1262 residues: Cytoplasmic FMR1-interacting protein homolog (1262 aa).

The interval 519–550 (LNRMTDVKGKKKSSAPKGDSANSSSSDIRIPR) is disordered.

The protein belongs to the CYFIP family. Interacts with gex-3.

The protein localises to the cytoplasm. Functionally, required for initial steps of body morphogenesis. May play a role in egg laying and yolk protein clatherin-mediated endocytosis by oocytes during oogenesis. Plays a role in the formation of muscle connections, also called muscle arm extensions, between the body wall and the motor axons in the dorsal and ventral cord. The chain is Cytoplasmic FMR1-interacting protein homolog from Caenorhabditis elegans.